A 349-amino-acid chain; its full sequence is Protein-glutamate methylesterase/protein-glutamine glutaminase (349 aa).

Positions 5 to 122 constitute a Response regulatory domain; sequence RVLSVDDSAL…REGMLAYSEM (118 aa). Aspartate 56 is modified (4-aspartylphosphate). The CheB-type methylesterase domain maps to 152-344; sequence LLSSEKLIAI…QQMLATISAG (193 aa). Active-site residues include serine 164, histidine 190, and aspartate 286.

The protein belongs to the CheB family. Phosphorylated by CheA. Phosphorylation of the N-terminal regulatory domain activates the methylesterase activity.

It is found in the cytoplasm. The catalysed reaction is [protein]-L-glutamate 5-O-methyl ester + H2O = L-glutamyl-[protein] + methanol + H(+). It catalyses the reaction L-glutaminyl-[protein] + H2O = L-glutamyl-[protein] + NH4(+). Functionally, involved in chemotaxis. Part of a chemotaxis signal transduction system that modulates chemotaxis in response to various stimuli. Catalyzes the demethylation of specific methylglutamate residues introduced into the chemoreceptors (methyl-accepting chemotaxis proteins or MCP) by CheR. Also mediates the irreversible deamidation of specific glutamine residues to glutamic acid. This is Protein-glutamate methylesterase/protein-glutamine glutaminase from Shigella flexneri.